The chain runs to 863 residues: Receptor-like protein Cf-9 (863 aa).

The N-terminal stretch at 1–21 is a signal peptide; the sequence is MDCVKLVFLMLYTFLCQLALS. The Extracellular portion of the chain corresponds to 22 to 812; sequence SSLPHLCPED…EEDSPMISWQ (791 aa). The interval 24 to 91 is N-cap; the sequence is LPHLCPEDQA…GVHCDETTGQ (68 aa). Residues N48, N72, N109, N127, N142, N191, N204, and N212 are each glycosylated (N-linked (GlcNAc...) asparagine). One copy of the LRR 1; degenerate repeat lies at 92 to 115; the sequence is VIALDLRCSQLQGKFHSNSSLFQL. LRR repeat units follow at residues 116–139 and 141–164; these read SNLK…KFGE and SNLT…ICHL. One copy of the LRR 4; degenerate repeat lies at 165–191; the sequence is SKLHVLRICDQYGLSLVPYNFELLLKN. LRR repeat units follow at residues 192-214, 215-238, 241-263, 265-287, 288-312, 314-335, 336-358, 359-382, 383-406, 408-428, 429-452, 454-476, 477-500, 502-524, 525-549, 551-572, 573-597, 599-623, 667-690, 691-714, 715-739, and 741-759; these read LTQL…SNFS, SHLT…VFHL, LQSL…KWNS, ASLM…SFSH, LTSL…LWNL, NIVF…FTIF, EKLK…LSFN, TQLE…ISGL, QNLE…IFSL, SLVE…EFKS, KTLS…LLNQ, NLQL…ICNL, KTLI…VVER, EYLS…TFSV, GNIL…MINC, YLTL…WLGY, LFQL…GNTN, FMGL…ILGN, LDSN…IIGD, LVGL…SFQN, LSVL…LASL, and FLEV…IPKG. A glycan (N-linked (GlcNAc...) asparagine) is linked at N262. N-linked (GlcNAc...) asparagine glycans are attached at residues N300 and N311. 3 N-linked (GlcNAc...) asparagine glycosylation sites follow: N378, N396, and N416. The N-linked (GlcNAc...) asparagine glycan is linked to N464. A glycan (N-linked (GlcNAc...) asparagine) is linked at N519. N563 carries N-linked (GlcNAc...) asparagine glycosylation. N-linked (GlcNAc...) asparagine glycans are attached at residues N698 and N714. N-linked (GlcNAc...) asparagine glycosylation is found at N746 and N767. Positions 760–812 are C-cap/acidic domain; that stretch reads KQFDSFGNTSYQGNDGLRGFPLSKLCGGEDQVTTPAELDQEEEEEDSPMISWQ. The helical transmembrane segment at 813–833 threads the bilayer; the sequence is GVLVGYGCGLVIGLSVIYIMW. The Cytoplasmic portion of the chain corresponds to 834 to 863; the sequence is STQYPAWFSRMDLKLEHIITTKMKKHKKRY.

Belongs to the RLP family. In terms of assembly, interacts with thioredoxin-like protein CITRX.

Its subcellular location is the cell membrane. In terms of biological role, involved in plant defense. Confers resistance to the fungal pathogen C.fulvum through recognition of the AVR9 elicitor protein. The chain is Receptor-like protein Cf-9 from Solanum pimpinellifolium (Currant tomato).